The following is a 113-amino-acid chain: Small ribosomal subunit protein bS6 (113 aa).

This sequence belongs to the bacterial ribosomal protein bS6 family.

In terms of biological role, binds together with bS18 to 16S ribosomal RNA. The sequence is that of Small ribosomal subunit protein bS6 (rpsF) from Synechocystis sp. (strain ATCC 27184 / PCC 6803 / Kazusa).